The chain runs to 95 residues: Large ribosomal subunit protein bL28 (95 aa).

It belongs to the bacterial ribosomal protein bL28 family.

In Dinoroseobacter shibae (strain DSM 16493 / NCIMB 14021 / DFL 12), this protein is Large ribosomal subunit protein bL28.